We begin with the raw amino-acid sequence, 330 residues long: 4-hydroxythreonine-4-phosphate dehydrogenase (330 aa).

Thr-133 is a substrate binding site. Positions 161, 206, and 261 each coordinate a divalent metal cation. Positions 269, 278, and 287 each coordinate substrate.

The protein belongs to the PdxA family. As to quaternary structure, homodimer. It depends on Zn(2+) as a cofactor. Mg(2+) serves as cofactor. The cofactor is Co(2+).

The protein resides in the cytoplasm. It catalyses the reaction 4-(phosphooxy)-L-threonine + NAD(+) = 3-amino-2-oxopropyl phosphate + CO2 + NADH. The protein operates within cofactor biosynthesis; pyridoxine 5'-phosphate biosynthesis; pyridoxine 5'-phosphate from D-erythrose 4-phosphate: step 4/5. Its function is as follows. Catalyzes the NAD(P)-dependent oxidation of 4-(phosphooxy)-L-threonine (HTP) into 2-amino-3-oxo-4-(phosphooxy)butyric acid which spontaneously decarboxylates to form 3-amino-2-oxopropyl phosphate (AHAP). This Xylella fastidiosa (strain 9a5c) protein is 4-hydroxythreonine-4-phosphate dehydrogenase.